A 401-amino-acid chain; its full sequence is Beta-ketoadipyl-CoA thiolase (401 aa).

Cys91 (acyl-thioester intermediate) is an active-site residue. Residues His357 and Cys387 each act as proton acceptor in the active site.

It belongs to the thiolase-like superfamily. Thiolase family. Homotetramer.

The enzyme catalyses succinyl-CoA + acetyl-CoA = 3-oxoadipyl-CoA + CoA. It participates in aromatic compound metabolism; beta-ketoadipate pathway; acetyl-CoA and succinyl-CoA from 3-oxoadipate: step 2/2. Catalyzes thiolytic cleavage of beta-ketoadipyl-CoA to succinyl-CoA and acetyl-CoA. The sequence is that of Beta-ketoadipyl-CoA thiolase (pcaF) from Pseudomonas knackmussii (strain DSM 6978 / CCUG 54928 / LMG 23759 / B13).